Reading from the N-terminus, the 111-residue chain is Holo-[acyl-carrier-protein] synthase (111 aa).

Asp8 and Glu57 together coordinate Mg(2+).

This sequence belongs to the P-Pant transferase superfamily. AcpS family. Requires Mg(2+) as cofactor.

It is found in the cytoplasm. The catalysed reaction is apo-[ACP] + CoA = holo-[ACP] + adenosine 3',5'-bisphosphate + H(+). Transfers the 4'-phosphopantetheine moiety from coenzyme A to a Ser of acyl-carrier-protein. This chain is Holo-[acyl-carrier-protein] synthase, found in Mycoplasmoides gallisepticum (strain R(low / passage 15 / clone 2)) (Mycoplasma gallisepticum).